Consider the following 683-residue polypeptide: Dipeptidyl-peptidase 5 (683 aa).

Positions 1–19 (MHSLFKQLVFFLVMTLTAA) are cleaved as a signal peptide. N-linked (GlcNAc...) asparagine glycosylation is found at Asn53, Asn69, Asn103, Asn116, Asn126, and Asn400. Active-site charge relay system residues include Ser535, Asp617, and His649.

It belongs to the peptidase S9C family.

The protein resides in the secreted. Its subcellular location is the cytoplasm. The protein localises to the nucleus. In Schizosaccharomyces pombe (strain 972 / ATCC 24843) (Fission yeast), this protein is Dipeptidyl-peptidase 5.